The chain runs to 1782 residues: A-kinase anchor protein 12 (1782 aa).

Disordered regions lie at residues 1 to 53 (MGAG…DPAT), 71 to 169 (QDEL…QAND), 189 to 400 (KTEK…APLA), 421 to 886 (VSTV…ELSE), 938 to 1089 (EREV…LKKE), 1105 to 1134 (PFTQGKVVGQTTPESFEKAPQVTESIESSE), 1157 to 1274 (AIPP…ADEK), and 1305 to 1355 (KGEG…HVNE). G2 is lipidated: N-myristoyl glycine. 5 positions are modified to phosphoserine: S11, S19, S28, S75, and S96. The segment covering 16–53 (PEGSSTPAEPEPSGGGPSAEAAPDTTADPAIAASDPAT) has biased composition (low complexity). Residues 108 to 125 (GQRDSEDVSKRDSDKEMA) are compositionally biased toward basic and acidic residues. The segment covering 145-154 (IIEQIPSSES) has biased composition (low complexity). S154 is subject to Phosphoserine. A compositionally biased stretch (polar residues) spans 157–168 (EELTQPTESQAN). A phosphoserine mark is found at S219, S248, S258, S280, S283, S286, S347, and S371. Over residues 226 to 249 (ASKESEPKQSTEKPEETLKREQSH) the composition is skewed to basic and acidic residues. Positions 266–557 (KEEGEEKQEK…TQVPADSPDS (292 aa)) are involved in PKC-binding. 2 stretches are compositionally biased toward basic and acidic residues: residues 315–347 (KPKEDEVEASEKKKEQEPEKVDTEEDGKAEVAS) and 363–379 (ESAHEPRLSAEYEKVEL). Y374 bears the Phosphotyrosine mark. Phosphoserine occurs at positions 381 and 392. Over residues 423-435 (TVEERTEEQKTEV) the composition is skewed to basic and acidic residues. Over residues 446–456 (ELVEMDAEPQE) the composition is skewed to acidic residues. The segment covering 458–468 (EPAKELVKLKE) has biased composition (basic and acidic residues). Residues S483 and S505 each carry the phosphoserine modification. Positions 528–537 (LSGKKQKGKR) are enriched in basic residues. Phosphoserine is present on residues S554, S557, S598, S612, S627, and S629. The AKAP CaM-binding 1 motif lies at 607–627 (VTPWASFKKMVTPKKRVRRPS). Positions 625–639 (RPSESDKEDELDKVK) are enriched in basic and acidic residues. Over residues 640–652 (SATLSSTESTASE) the composition is skewed to low complexity. Residue T642 is modified to Phosphothreonine. Phosphoserine occurs at positions 644, 645, 648, and 651. The span at 655-674 (EEMKGSVEEPKPEEPKRKVD) shows a compositional bias: basic and acidic residues. Residues S696, S697, and S698 each carry the phosphoserine modification. A compositionally biased stretch (basic and acidic residues) spans 708–724 (GGDHQKADEAGKDKETG). Polar residues predominate over residues 739 to 749 (QGSSSPEQAGS). 3 positions are modified to phosphoserine: S749, S761, and S787. An AKAP CaM-binding 2 motif is present at residues 756–776 (VSTWESFKRLVTPRKKSKSKL). The segment covering 792–803 (STPDTEPGKEES) has biased composition (basic and acidic residues). The short motif at 801–821 (EESWVSIKKFIPGRRKKRPDG) is the AKAP CaM-binding 3 element. Residue S806 is modified to Phosphoserine. A compositionally biased stretch (low complexity) spans 986-997 (GAEEGTEASAAE). Residue K1051 forms a Glycyl lysine isopeptide (Lys-Gly) (interchain with G-Cter in SUMO1) linkage. Positions 1072–1089 (AEAERPEEQAEASGLKKE) are enriched in basic and acidic residues. Positions 1164 to 1174 (ETPTDSETDGS) are enriched in polar residues. Basic and acidic residues-rich tracts occupy residues 1187–1198 (QKDEIVEIHEEN) and 1231–1251 (EETKEQSKMEDTLEHTDKEVS). The span at 1253 to 1267 (ETVSILSKTEGTQEA) shows a compositional bias: polar residues. Phosphoserine occurs at positions 1328 and 1331. Residues 1333-1355 (VEREMVVQVEREKTEAEPTHVNE) show a composition bias toward basic and acidic residues. Phosphoserine occurs at positions 1391 and 1395. Positions 1541–1554 (ELETKSSKLVQNII) are RII-binding. The interval 1584 to 1782 (KADSQDAGQE…ESAKSELTES (199 aa)) is disordered. Position 1587 is a phosphoserine (S1587). Over residues 1603 to 1612 (ASAQDETPIT) the composition is skewed to polar residues. 2 stretches are compositionally biased toward basic and acidic residues: residues 1629–1639 (DISKDMSEASE) and 1675–1699 (VPEDDGHALLAERIEKSLVEPKEDE). S1727 carries the post-translational modification Phosphoserine. 2 stretches are compositionally biased toward basic and acidic residues: residues 1734–1757 (KQKEKEDAQEVELQEGKVHSESDK) and 1766–1782 (ELQKQERESAKSELTES).

Binds to dimeric RII-alpha regulatory subunit of PKC. In terms of tissue distribution, expressed in endothelial cells, cultured fibroblasts and osteosarcoma, but not in platelets, leukocytes, monocytic cell lines or peripherical blood cells.

It is found in the cytoplasm. The protein resides in the cell cortex. Its subcellular location is the cytoskeleton. It localises to the membrane. Functionally, anchoring protein that mediates the subcellular compartmentation of protein kinase A (PKA) and protein kinase C (PKC). The chain is A-kinase anchor protein 12 (AKAP12) from Homo sapiens (Human).